Consider the following 352-residue polypeptide: Pejvakin (352 aa).

It belongs to the gasdermin family. As to quaternary structure, interacts with MAP1LC3B; interaction is direct. Interacts with IQGAP1. Interacts with ROCK2. Interacts with TRIOBP. In ear, it is detected in the organ of Corti and the spiral ganglion within the cochlea in the sensory areas of the vestibule (cristae ampullares of the semicircular ducts, and maculae of the saccule and utricle) and in the first 3 relays (cochlear nuclei, superior olivary complex and inferior colliculus) of the afferent auditory pathway. Detected in hair cells of the cochlea and vestibule but not in neurons. In the afferent auditory pathway, it is present in the cell bodies of neurons but not in fiber bundles such as the trapezoid body in the brainstem. Also detected in spiral ganglion cells, which form the auditory nerve and project to the cochlear nuclei in the brainstem. Also present in the cochlear nuclei, the superior olive and the inferior colliculus (at protein level). Expressed in all the adult organs tested: brain, eye, inner ear, heart, lung, kidney, liver, intestine, testis and weakly in skeletal muscle.

The protein localises to the peroxisome membrane. The protein resides in the cell projection. It is found in the cilium. Peroxisome-associated protein required to protect auditory hair cells against noise-induced damage. Acts by regulating noise-induced peroxisome proliferation in auditory hair cells and neurons, and promoting autophagic degradation of damaged peroxisomes (pexophagy). Noise overexposure increases reactive oxygen species (ROS) levels, causing oxidative damage to auditory hair cells and resulting in hearing loss. PJVK acts as a ROS sensor that recruits the autophagy machinery to trigger pexophagy of peroxisomes damaged by oxidative stress. In addition to pexophagy, also required to promote peroxisome proliferation in response to sound overstimulation. In Mus musculus (Mouse), this protein is Pejvakin.